The chain runs to 372 residues: ATP phosphoribosyltransferase regulatory subunit (372 aa).

Belongs to the class-II aminoacyl-tRNA synthetase family. HisZ subfamily. In terms of assembly, heteromultimer composed of HisG and HisZ subunits.

It is found in the cytoplasm. It functions in the pathway amino-acid biosynthesis; L-histidine biosynthesis; L-histidine from 5-phospho-alpha-D-ribose 1-diphosphate: step 1/9. In terms of biological role, required for the first step of histidine biosynthesis. May allow the feedback regulation of ATP phosphoribosyltransferase activity by histidine. The sequence is that of ATP phosphoribosyltransferase regulatory subunit from Rhizobium rhizogenes (strain K84 / ATCC BAA-868) (Agrobacterium radiobacter).